Here is a 352-residue protein sequence, read N- to C-terminus: Ion-translocating oxidoreductase complex subunit D (352 aa).

The next 5 membrane-spanning stretches (helical) occupy residues 20-40 (IMLLVLLAAVPGIAAQLWFFG), 42-62 (GTLVQILLASVSALLAEALVL), 78-109 (ALLTGLLLAVSIPPLAPWWMVVLGTVFAVIIA), 123-143 (PAMIGYVVLLISFPVQMTSWL), and 148-168 (IAVNIPGFIDAIQVIFSGHTA). Position 187 is an FMN phosphoryl threonine (Thr-187). The next 5 helical transmembrane spans lie at 214–234 (ILAGAGWQWVNLAWLAGGVWL), 242–262 (WHIPLSFLVTLALCAMLGWLF), 267–287 (LAAPQIHLLSGATMLGAFFIL), 301–321 (LIFGALAGLLVWLIRSFGGYP), and 322–342 (DGVAFAVLLANITVPLIDYYT).

Belongs to the NqrB/RnfD family. As to quaternary structure, the complex is composed of six subunits: RsxA, RsxB, RsxC, RsxD, RsxE and RsxG. It depends on FMN as a cofactor.

It localises to the cell inner membrane. In terms of biological role, part of a membrane-bound complex that couples electron transfer with translocation of ions across the membrane. Required to maintain the reduced state of SoxR. Probably transfers electron from NAD(P)H to SoxR. In Escherichia coli (strain K12), this protein is Ion-translocating oxidoreductase complex subunit D.